The primary structure comprises 125 residues: Small ribosomal subunit protein eS26 (125 aa).

The protein belongs to the eukaryotic ribosomal protein eS26 family.

This chain is Small ribosomal subunit protein eS26 (RPS26), found in Sterkiella nova (Ciliate).